A 543-amino-acid polypeptide reads, in one-letter code: Early growth response protein 1 (543 aa).

Disordered regions lie at residues 1-105, 165-213, and 264-284; these read MAAA…AESF, TNPP…PTPN, and LGLG…TQQP. Over residues 57–66 the composition is skewed to low complexity; it reads GSGSNSSSSS. The span at 67 to 77 shows a compositional bias: gly residues; it reads SGGGGGGGGGS. The span at 167-189 shows a compositional bias: low complexity; it reads PPASSSSAPSPAASSASASQSPP. A Glycyl lysine isopeptide (Lys-Gly) (interchain with G-Cter in SUMO2) cross-link involves residue lysine 305. Residues 318–339 form a disordered region; that stretch reads PSRMRKYPNRPSKTPPHERPYA. 3 C2H2-type zinc fingers span residues 338 to 362, 368 to 390, and 396 to 418; these read YACP…IRIH, FQCR…IRTH, and FACD…TKIH. Positions 409–487 are disordered; that stretch reads DERKRHTKIH…GSSTYPSPVH (79 aa). Over residues 413–423 the composition is skewed to basic residues; it reads RHTKIHLRQKD. Residues 429–486 show a composition bias toward low complexity; the sequence is SVVASSATSSLSSYPSPVATSYPSPVTTSYPSPATTSYPSPVPTSFSSPGSSTYPSPV.

This sequence belongs to the EGR C2H2-type zinc-finger protein family. In terms of assembly, interacts with SNAI1 and SP1 upon 12-O-tetradecanoylphorbol-13-acetate (TPA) induction. Detected in neutrophils (at protein level).

Its subcellular location is the nucleus. It localises to the cytoplasm. Its function is as follows. Transcriptional regulator. Recognizes and binds to the DNA sequence 5'-GCG(T/G)GGGCG-3'(EGR-site) in the promoter region of target genes. Binds double-stranded target DNA, irrespective of the cytosine methylation status. Regulates the transcription of numerous target genes, and thereby plays an important role in regulating the response to growth factors, DNA damage, and ischemia. Plays a role in the regulation of cell survival, proliferation and cell death. Activates expression of p53/TP53 and TGFB1, and thereby helps prevent tumor formation. Required for normal progress through mitosis and normal proliferation of hepatocytes after partial hepatectomy. Mediates responses to ischemia and hypoxia; regulates the expression of proteins such as IL1B and CXCL2 that are involved in inflammatory processes and development of tissue damage after ischemia. Regulates biosynthesis of luteinizing hormone (LHB) in the pituitary. Regulates the amplitude of the expression rhythms of clock genes: BMAL1, PER2 and NR1D1 in the liver via the activation of PER1 (clock repressor) transcription. Regulates the rhythmic expression of core-clock gene BMAL1 in the suprachiasmatic nucleus (SCN). This chain is Early growth response protein 1 (EGR1), found in Homo sapiens (Human).